The sequence spans 257 residues: Snake venom serine protease BITS01A (257 aa).

The first 18 residues, 1–18 (MVLIRVIANLLILQVSYA), serve as a signal peptide directing secretion. A propeptide spanning residues 19-24 (QKSSEL) is cleaved from the precursor. Positions 25 to 248 (VVGGDECDIN…YLPWIQSIIA (224 aa)) constitute a Peptidase S1 domain. Cystine bridges form between Cys31/Cys162, Cys49/Cys65, Cys97/Cys255, Cys141/Cys209, Cys173/Cys188, and Cys199/Cys224. The active-site Charge relay system is the His64. Asn101 is a glycosylation site (N-linked (GlcNAc...) asparagine). Residue Asp109 is the Charge relay system of the active site. N-linked (GlcNAc...) asparagine glycans are attached at residues Asn121, Asn153, and Asn169. Ser203 (charge relay system) is an active-site residue. Residues Asn210 and Asn250 are each glycosylated (N-linked (GlcNAc...) asparagine).

The protein belongs to the peptidase S1 family. Snake venom subfamily. Monomer. In terms of tissue distribution, expressed by the venom gland.

Its subcellular location is the secreted. In terms of biological role, snake venom serine protease that may act in the hemostasis system of the prey. This is Snake venom serine protease BITS01A from Bothrops insularis (Golden lancehead).